A 393-amino-acid polypeptide reads, in one-letter code: CCCH-type zinc finger protein oma-2 (393 aa).

The tract at residues 1–26 (MDMLKENVIQNNEARTESSVEPSHPD) is disordered. Over residues 14 to 26 (ARTESSVEPSHPD) the composition is skewed to basic and acidic residues. C3H1-type zinc fingers lie at residues 105 to 133 (SYKT…HGEE) and 147 to 175 (KYRT…HPDN). 2 disordered regions span residues 227–251 (TPDE…RYEL) and 311–340 (KQST…LTAA). Low complexity predominate over residues 313–340 (STPGGVSGYSSSGSTPSQDSDSSPLTAA). Threonine 327 is subject to Phosphothreonine; by GSK3.

As to expression, exclusively expressed in the hermaphrodite gonad. Expression only in cellulized oocytes. Widely distributed throughout gonadal oocytes from the mitotic stage to the developing diakinesis stage.

The protein resides in the cytoplasm. Its subcellular location is the cytoplasmic granule. It is found in the cytoskeleton. The protein localises to the microtubule organizing center. It localises to the centrosome. In terms of biological role, zinc-finger RNA-binding protein that binds to 5'-UA[AU]-3' motifs in the 3'-UTR of maternal mRNAs to suppress translation in oocytes and embryos. Acts redundantly with oma-1 to control the temporal expression and distribution of maternal proteins and thereby promote meiotic progression, oocyte maturation, fertilization and embryonic development. Also, together with oma-1, is involved in P-granule distribution during embryonic development. The sequence is that of CCCH-type zinc finger protein oma-2 from Caenorhabditis elegans.